The primary structure comprises 473 residues: Siroheme synthase (473 aa).

Positions 1 to 203 (MTLFPIFADL…QQPGLAEQEL (203 aa)) are precorrin-2 dehydrogenase /sirohydrochlorin ferrochelatase. Residues 22–23 (AV) and 43–44 (PR) each bind NAD(+). The residue at position 128 (Ser128) is a Phosphoserine. A uroporphyrinogen-III C-methyltransferase region spans residues 216-473 (GSVVLVGAGP…GLPGPQALAA (258 aa)). Pro225 lines the S-adenosyl-L-methionine pocket. Asp248 serves as the catalytic Proton acceptor. Residue Lys270 is the Proton donor of the active site. S-adenosyl-L-methionine is bound by residues 302–304 (GGD), Ile307, 332–333 (TA), Met384, and Gly413.

The protein in the N-terminal section; belongs to the precorrin-2 dehydrogenase / sirohydrochlorin ferrochelatase family. This sequence in the C-terminal section; belongs to the precorrin methyltransferase family.

The catalysed reaction is uroporphyrinogen III + 2 S-adenosyl-L-methionine = precorrin-2 + 2 S-adenosyl-L-homocysteine + H(+). It catalyses the reaction precorrin-2 + NAD(+) = sirohydrochlorin + NADH + 2 H(+). The enzyme catalyses siroheme + 2 H(+) = sirohydrochlorin + Fe(2+). It functions in the pathway cofactor biosynthesis; adenosylcobalamin biosynthesis; precorrin-2 from uroporphyrinogen III: step 1/1. It participates in cofactor biosynthesis; adenosylcobalamin biosynthesis; sirohydrochlorin from precorrin-2: step 1/1. Its pathway is porphyrin-containing compound metabolism; siroheme biosynthesis; precorrin-2 from uroporphyrinogen III: step 1/1. The protein operates within porphyrin-containing compound metabolism; siroheme biosynthesis; siroheme from sirohydrochlorin: step 1/1. It functions in the pathway porphyrin-containing compound metabolism; siroheme biosynthesis; sirohydrochlorin from precorrin-2: step 1/1. In terms of biological role, multifunctional enzyme that catalyzes the SAM-dependent methylations of uroporphyrinogen III at position C-2 and C-7 to form precorrin-2 via precorrin-1. Then it catalyzes the NAD-dependent ring dehydrogenation of precorrin-2 to yield sirohydrochlorin. Finally, it catalyzes the ferrochelation of sirohydrochlorin to yield siroheme. This Bordetella pertussis (strain Tohama I / ATCC BAA-589 / NCTC 13251) protein is Siroheme synthase.